The chain runs to 878 residues: Phosphoenolpyruvate carboxylase (878 aa).

Catalysis depends on residues His137 and Lys545.

It belongs to the PEPCase type 1 family. Mg(2+) serves as cofactor.

The enzyme catalyses oxaloacetate + phosphate = phosphoenolpyruvate + hydrogencarbonate. In terms of biological role, forms oxaloacetate, a four-carbon dicarboxylic acid source for the tricarboxylic acid cycle. This Proteus mirabilis (strain HI4320) protein is Phosphoenolpyruvate carboxylase.